The sequence spans 493 residues: 6-phosphogluconate dehydrogenase, decarboxylating (493 aa).

Residues 12-17 (GLAVMG), 35-37 (NRT), 77-79 (VKA), and Asn-105 contribute to the NADP(+) site. Substrate contacts are provided by residues Asn-105 and 131–133 (SGG). Lys-187 (proton acceptor) is an active-site residue. 190–191 (HN) serves as a coordination point for substrate. The Proton donor role is filled by Glu-194. Substrate-binding residues include Tyr-195, Lys-266, Arg-293, Arg-456, and His-462.

It belongs to the 6-phosphogluconate dehydrogenase family. As to quaternary structure, homodimer.

The enzyme catalyses 6-phospho-D-gluconate + NADP(+) = D-ribulose 5-phosphate + CO2 + NADPH. It participates in carbohydrate degradation; pentose phosphate pathway; D-ribulose 5-phosphate from D-glucose 6-phosphate (oxidative stage): step 3/3. Its function is as follows. Catalyzes the oxidative decarboxylation of 6-phosphogluconate to ribulose 5-phosphate and CO(2), with concomitant reduction of NADP to NADPH. This Dictyostelium discoideum (Social amoeba) protein is 6-phosphogluconate dehydrogenase, decarboxylating (gnd).